Consider the following 204-residue polypeptide: Urease accessory protein UreG (204 aa).

GTP is bound at residue 12–19; sequence GPVGSGKT.

It belongs to the SIMIBI class G3E GTPase family. UreG subfamily. In terms of assembly, homodimer. UreD, UreF and UreG form a complex that acts as a GTP-hydrolysis-dependent molecular chaperone, activating the urease apoprotein by helping to assemble the nickel containing metallocenter of UreC. The UreE protein probably delivers the nickel.

The protein resides in the cytoplasm. Functionally, facilitates the functional incorporation of the urease nickel metallocenter. This process requires GTP hydrolysis, probably effectuated by UreG. This is Urease accessory protein UreG from Pseudomonas fluorescens (strain SBW25).